Reading from the N-terminus, the 365-residue chain is Aminotransferase poxL (365 aa).

Position 92 (Arg-92) interacts with pyridoxal 5'-phosphate. An N6-(pyridoxal phosphate)lysine modification is found at Lys-193. Glu-229 is a binding site for pyridoxal 5'-phosphate.

This sequence belongs to the class-IV pyridoxal-phosphate-dependent aminotransferase family. It depends on pyridoxal 5'-phosphate as a cofactor.

It participates in secondary metabolite biosynthesis. In terms of biological role, aminotransferase; part of the gene cluster that mediates the biosynthesis of oxaleimides, cytotoxic compounds containing an unusual disubstituted succinimide moiety. The first step of the pathway is provided by the HR-PKS poxF that serves in a new mode of collaborative biosynthesis with the PKS-NRPS poxE, by providing the olefin containing amino acid substrate via the synthesis of an ACP-bound dec-4-enoate. The cytochrome P450 monooxygenase poxM-catalyzed oxidation at the alpha-position creates the enzyme-bound 2-hydroxydec-4-enoyl-ACP thioester, which may be prone to spontaneous hydrolysis to yield 2-hydroxydec-4-enoic acid due to increased electrophilicity of the carbonyl. 2-hydroxydec-4-enoic acid can then be further oxidized by poxM to yield the alpha-ketoacid 2-oxodec-4-enoicacid, which is reductively aminated by the aminotransferase poxL to yield (S,E)-2-aminodec-4-enoic acid. The Hybrid PKS-NRPS synthetase poxE then performs condensation between the octaketide product of its PKS modules and the amino group of (S,E)-2-aminodec-4-enoic acid which is activated and incorporated by the adenylation domain. The resulting aminoacyl product can be cyclized by the Diels-Alderase PoxQ and reductively released by the reductive (R) domain of poxE to yield an aldehyde intermediate. The released aldehyde is then substrate for a Knoevenagel condensation by the hydrolyase poxO followed by an oxidation at the 5-position of the pyrrolidone ring. The presence of the olefin from the amino acid building block allows for migration of the substituted allyl group to occur. This allylic transposition reaction takes place in a conjugate addition, semipinacol-like fashion to yield a succinimide intermediate. Iterative two-electron oxidations of the C7 methyl of the succinimide intermediate to the carboxylic acid can be catalyzed by one of two remaining cytochrome P450 monooxygenasess poxC or poxD to yield oxaleimide A. Subsequent oxidation yields the maleimide scaffold oxaleimide I. Both oxaleimide A and oxaleimide I can undergo oxidative modifications in the decalin ring to yield the series of products oxaleimides B to H. This Penicillium oxalicum protein is Aminotransferase poxL.